Here is a 266-residue protein sequence, read N- to C-terminus: MQGSTRRMSVMTDVHRRFLQLLMTHGVLEEWDVKRLQRHCYKVHDRNATVDKLEDFINNINSVLESLYIEIKRGVTEDDGRPIYALVNLATTSISKMATDFAENELDLFRKALELIIDSETGFGSSTNILNLVDQLKGKKMRKKEAEQVLQKFVQNKWLIEKEGEFTLHGRAILEMEQYIRETYPDAVKICNICHSLLIQGQSCETCGIRMHLPCVAKYFQSNAEPRCPHCNDYWPHEIPKVFDPEKERESGVSKSNKKSLRSRQH.

Residues 1 to 102 (MQGSTRRMSV…SISKMATDFA (102 aa)) are interaction with NSMCE3. An RING-type; atypical zinc finger spans residues 191 to 232 (CNICHSLLIQGQSCETCGIRMHLPCVAKYFQSNAEPRCPHCN). Residues 245 to 266 (PEKERESGVSKSNKKSLRSRQH) form a disordered region. Ser251 bears the Phosphoserine mark. The span at 256 to 266 (SNKKSLRSRQH) shows a compositional bias: basic residues.

It belongs to the NSE1 family. Component of the SMC5-SMC6 complex which consists at least of SMC5, SMC6, NSMCE2, NSMCE1, NSMCE4A or EID3 and NSMCE3. NSMCE1, NSMCE4A or EID3 and NSMCE3 probably form a subcomplex that bridges the head domains of the SMC5-SMC6 heterodimer. Interacts with NSMCE3. In terms of processing, ubiquitinated.

It localises to the nucleus. The protein localises to the chromosome. It is found in the telomere. It catalyses the reaction S-ubiquitinyl-[E2 ubiquitin-conjugating enzyme]-L-cysteine + [acceptor protein]-L-lysine = [E2 ubiquitin-conjugating enzyme]-L-cysteine + N(6)-ubiquitinyl-[acceptor protein]-L-lysine.. In terms of biological role, RING-type zinc finger-containing E3 ubiquitin ligase that assembles with melanoma antigen protein (MAGE) to catalyze the direct transfer of ubiquitin from E2 ubiquitin-conjugating enzyme to a specific substrate. Within MAGE-RING ubiquitin ligase complex, MAGE stimulates and specifies ubiquitin ligase activity likely through recruitment and/or stabilization of the E2 ubiquitin-conjugating enzyme at the E3:substrate complex. Involved in maintenance of genome integrity, DNA damage response and DNA repair. NSMCE3/MAGEG1 and NSMCE1 ubiquitin ligase are components of SMC5-SMC6 complex and may positively regulate homologous recombination-mediated DNA repair. This chain is Non-structural maintenance of chromosomes element 1 homolog (NSMCE1), found in Pongo abelii (Sumatran orangutan).